Reading from the N-terminus, the 457-residue chain is Glycine receptor subunit alpha-1 (457 aa).

Positions 1 to 28 are cleaved as a signal peptide; that stretch reads MYSFNTLRLYLWETIVFFSLAASKEAEA. Residues 29 to 250 are Extracellular-facing; it reads ARSAPKPMSP…RFHLERQMGY (222 aa). Asn66 is a glycosylation site (N-linked (GlcNAc...) asparagine). 2 residues coordinate glycine: Arg93 and Ser157. Cys166 and Cys180 are disulfide-bonded. Glu220 and Asp222 together coordinate Zn(2+). A disulfide bond links Cys226 and Cys237. 230–235 lines the strychnine pocket; the sequence is YNTGKF. Thr232 contacts glycine. His243 contributes to the Zn(2+) binding site. The chain crosses the membrane as a helical span at residues 251–272; that stretch reads YLIQMYIPSLLIVILSWISFWI. Residues 273 to 277 are Cytoplasmic-facing; the sequence is NMDAA. The chain crosses the membrane as a helical span at residues 278 to 298; sequence PARVGLGITTVLTMTTQSSGS. Topologically, residues 299 to 309 are extracellular; that stretch reads RASLPKVSYVK. The helical transmembrane segment at 310-330 threads the bilayer; the sequence is AIDIWMAVCLLFVFSALLEYA. Residues 331–425 lie on the Cytoplasmic side of the membrane; the sequence is AVNFVSRQHK…FIQRAKKIDK (95 aa). Residues 391 to 410 form a disordered region; it reads KGANNSNTTNPPPAPSKSPE. The chain crosses the membrane as a helical span at residues 426–446; it reads ISRIGFPMAFLIFNMFYWIIY. Over 447 to 457 the chain is Extracellular; it reads KIVRREDVHNQ.

This sequence belongs to the ligand-gated ion channel (TC 1.A.9) family. Glycine receptor (TC 1.A.9.3) subfamily. GLRA1 sub-subfamily. Interacts with GLRB to form heteropentameric channels; this is probably the predominant form in vivo. Heteropentamer composed of four GLRA1 subunits and one GLRB subunit. Heteropentamer composed of two GLRA1 and three GLRB. Heteropentamer composed of three GLRA1 and two GLRB. Homopentamer (in vitro). Both homopentamers and heteropentamers form functional ion channels, but their characteristics are subtly different.

The protein resides in the postsynaptic cell membrane. It is found in the synapse. Its subcellular location is the perikaryon. It localises to the cell projection. The protein localises to the dendrite. The protein resides in the cell membrane. It catalyses the reaction chloride(in) = chloride(out). Channel opening is triggered by extracellular glycine. Channel characteristics depend on the subunit composition; heteropentameric channels are activated by lower glycine levels and display faster desensitization. Channel opening is also triggered by taurine and beta-alanine. Channel activity is potentiated by nanomolar concentrations of Zn(2+); half-maximal activation is observed with 37 nM Zn(2+). Inhibited by higher Zn(2+) levels; haf-maximal inhibition occurs at 20 uM Zn(2+). Inhibited by strychnine. Strychnine binding locks the channel in a closed conformation and prevents channel opening in response to extracellular glycine. Inhibited by lindane. Inhibited by picrotoxin. Functionally, subunit of heteromeric glycine-gated chloride channels. Plays an important role in the down-regulation of neuronal excitability. Contributes to the generation of inhibitory postsynaptic currents. Channel activity is potentiated by ethanol. Potentiation of channel activity by intoxicating levels of ethanol contribute to the sedative effects of ethanol. This is Glycine receptor subunit alpha-1 (GLRA1) from Homo sapiens (Human).